A 451-amino-acid polypeptide reads, in one-letter code: Phosphoglucosamine mutase (451 aa).

The Phosphoserine intermediate role is filled by S103. Mg(2+) is bound by residues S103, D243, D245, and D247. Residue S103 is modified to Phosphoserine.

This sequence belongs to the phosphohexose mutase family. Mg(2+) is required as a cofactor. In terms of processing, activated by phosphorylation.

It catalyses the reaction alpha-D-glucosamine 1-phosphate = D-glucosamine 6-phosphate. Functionally, catalyzes the conversion of glucosamine-6-phosphate to glucosamine-1-phosphate. The protein is Phosphoglucosamine mutase of Levilactobacillus brevis (strain ATCC 367 / BCRC 12310 / CIP 105137 / JCM 1170 / LMG 11437 / NCIMB 947 / NCTC 947) (Lactobacillus brevis).